The following is a 938-amino-acid chain: Bifunctional uridylyltransferase/uridylyl-removing enzyme (938 aa).

Residues 1–379 form a uridylyltransferase region; the sequence is MPPRLRPTHL…PGRAQKRKPL (379 aa). Positions 380-733 are uridylyl-removing; it reads DEPGFHEVGG…GRIRSELNAA (354 aa). The HD domain maps to 495 to 617; that stretch reads VDEHTLRAVG…VQSPERLRLL (123 aa). 2 ACT domains span residues 734-813 and 845-924; these read EVVV…PVAR and VVEA…TAQA.

Belongs to the GlnD family. Requires Mg(2+) as cofactor.

The enzyme catalyses [protein-PII]-L-tyrosine + UTP = [protein-PII]-uridylyl-L-tyrosine + diphosphate. The catalysed reaction is [protein-PII]-uridylyl-L-tyrosine + H2O = [protein-PII]-L-tyrosine + UMP + H(+). Uridylyltransferase (UTase) activity is inhibited by glutamine, while glutamine activates uridylyl-removing (UR) activity. Modifies, by uridylylation and deuridylylation, the PII regulatory proteins (GlnB and homologs), in response to the nitrogen status of the cell that GlnD senses through the glutamine level. Under low glutamine levels, catalyzes the conversion of the PII proteins and UTP to PII-UMP and PPi, while under higher glutamine levels, GlnD hydrolyzes PII-UMP to PII and UMP (deuridylylation). Thus, controls uridylylation state and activity of the PII proteins, and plays an important role in the regulation of nitrogen assimilation and metabolism. This chain is Bifunctional uridylyltransferase/uridylyl-removing enzyme, found in Phenylobacterium zucineum (strain HLK1).